Consider the following 198-residue polypeptide: Holliday junction branch migration complex subunit RuvA (198 aa).

The tract at residues Met1–His63 is domain I. Positions Thr64–Lys142 are domain II. The flexible linker stretch occupies residues Ala143 to Lys147. Positions Ala148–Gly198 are domain III.

The protein belongs to the RuvA family. Homotetramer. Forms an RuvA(8)-RuvB(12)-Holliday junction (HJ) complex. HJ DNA is sandwiched between 2 RuvA tetramers; dsDNA enters through RuvA and exits via RuvB. An RuvB hexamer assembles on each DNA strand where it exits the tetramer. Each RuvB hexamer is contacted by two RuvA subunits (via domain III) on 2 adjacent RuvB subunits; this complex drives branch migration. In the full resolvosome a probable DNA-RuvA(4)-RuvB(12)-RuvC(2) complex forms which resolves the HJ.

It is found in the cytoplasm. In terms of biological role, the RuvA-RuvB-RuvC complex processes Holliday junction (HJ) DNA during genetic recombination and DNA repair, while the RuvA-RuvB complex plays an important role in the rescue of blocked DNA replication forks via replication fork reversal (RFR). RuvA specifically binds to HJ cruciform DNA, conferring on it an open structure. The RuvB hexamer acts as an ATP-dependent pump, pulling dsDNA into and through the RuvAB complex. HJ branch migration allows RuvC to scan DNA until it finds its consensus sequence, where it cleaves and resolves the cruciform DNA. This chain is Holliday junction branch migration complex subunit RuvA, found in Streptococcus pyogenes serotype M1.